The following is a 389-amino-acid chain: S-adenosylmethionine synthase (389 aa).

His-16 provides a ligand contact to ATP. A Mg(2+)-binding site is contributed by Asp-18. Glu-44 contributes to the K(+) binding site. Residues Glu-57 and Gln-100 each coordinate L-methionine. The interval 100–110 (QSPDIAQGVDE) is flexible loop. Residues 167–169 (DAK), 233–234 (RF), Asp-242, 248–249 (RK), Ala-265, and Lys-269 contribute to the ATP site. Asp-242 contributes to the L-methionine binding site. Lys-273 is an L-methionine binding site.

The protein belongs to the AdoMet synthase family. In terms of assembly, homotetramer; dimer of dimers. Mg(2+) serves as cofactor. K(+) is required as a cofactor.

The protein localises to the cytoplasm. It carries out the reaction L-methionine + ATP + H2O = S-adenosyl-L-methionine + phosphate + diphosphate. It participates in amino-acid biosynthesis; S-adenosyl-L-methionine biosynthesis; S-adenosyl-L-methionine from L-methionine: step 1/1. Catalyzes the formation of S-adenosylmethionine (AdoMet) from methionine and ATP. The overall synthetic reaction is composed of two sequential steps, AdoMet formation and the subsequent tripolyphosphate hydrolysis which occurs prior to release of AdoMet from the enzyme. The protein is S-adenosylmethionine synthase of Acidithiobacillus ferrooxidans (strain ATCC 23270 / DSM 14882 / CIP 104768 / NCIMB 8455) (Ferrobacillus ferrooxidans (strain ATCC 23270)).